The sequence spans 135 residues: NAD(P)H-quinone oxidoreductase subunit 3 (135 aa).

Helical transmembrane passes span 15–35, 79–99, and 104–124; these read IVFF…SSLV, MFAL…PWAV, and LGLL…VALV.

It belongs to the complex I subunit 3 family. In terms of assembly, NDH-1 can be composed of about 15 different subunits; different subcomplexes with different compositions have been identified which probably have different functions.

The protein resides in the cellular thylakoid membrane. It catalyses the reaction a plastoquinone + NADH + (n+1) H(+)(in) = a plastoquinol + NAD(+) + n H(+)(out). The enzyme catalyses a plastoquinone + NADPH + (n+1) H(+)(in) = a plastoquinol + NADP(+) + n H(+)(out). In terms of biological role, NDH-1 shuttles electrons from an unknown electron donor, via FMN and iron-sulfur (Fe-S) centers, to quinones in the respiratory and/or the photosynthetic chain. The immediate electron acceptor for the enzyme in this species is believed to be plastoquinone. Couples the redox reaction to proton translocation, and thus conserves the redox energy in a proton gradient. Cyanobacterial NDH-1 also plays a role in inorganic carbon-concentration. The chain is NAD(P)H-quinone oxidoreductase subunit 3 from Trichodesmium erythraeum (strain IMS101).